Here is a 153-residue protein sequence, read N- to C-terminus: UPF0756 membrane protein LCABL_15860 (153 aa).

Transmembrane regions (helical) follow at residues 4-24, 52-72, 85-105, and 115-135; these read WLFLLGILAIAIVGKNKSLII, WGVTVISAAIMVPIATGEIGF, WIAIGCGVLVAVLSAKGVGLL, and LVFGTIIGVVFLKGIAAGPVI.

Belongs to the UPF0756 family.

It is found in the cell membrane. The polypeptide is UPF0756 membrane protein LCABL_15860 (Lacticaseibacillus casei (strain BL23) (Lactobacillus casei)).